The primary structure comprises 491 residues: Tyrosine 3-monooxygenase (491 aa).

The residue at position 19 (serine 19) is a Phosphoserine; by CaMK2. Serine 31 bears the Phosphoserine mark. The residue at position 40 (serine 40) is a Phosphoserine; by CaMK2 and PKA. The Fe cation site is built by histidine 324, histidine 329, and glutamate 369. Serine 465 carries the post-translational modification Phosphoserine.

It belongs to the biopterin-dependent aromatic amino acid hydroxylase family. As to quaternary structure, homotetramer. Interacts (when phosphorylated at Ser-19) with YWHAG; one YWHAG dimer bounds to one TH tetramer and this interaction may influence the phosphorylation and dephosphorylation of other sites. Interacts with NT5DC2; the interaction results in reduced phosphorylation and decreased catalytic activity of TH. It depends on Fe(2+) as a cofactor. Post-translationally, phosphorylated on Ser-19, Ser-31 and Ser-40 by several protein kinases with different site specificities. Phosphorylation at Ser-31 and Ser-40 leads to an increase of TH activity. Phosphorylation at Ser-40 activates the enzyme and also counteracts the feedback inhibition of TH by catecholamines. Phosphorylation of Ser-19 and Ser-31 triggers the proteasomal degradation of TH through the ubiquitin-proteasome pathway. Phosphorylation at Ser-31 facilitates transport of TH from the soma to the nerve terminals via the microtubule network. Phosphorylation at Ser-19 induces the high-affinity binding to the 14-3-3 protein YWHAG; this interaction may influence the phosphorylation and dephosphorylation of other sites. Ser-19 increases the phosphorylation at Ser-40 in a hierarchical manner, leading to increased activity.

The protein localises to the cytoplasm. The protein resides in the perinuclear region. Its subcellular location is the nucleus. It localises to the cell projection. It is found in the axon. The protein localises to the cytoplasmic vesicle. The protein resides in the secretory vesicle. Its subcellular location is the synaptic vesicle. It catalyses the reaction (6R)-L-erythro-5,6,7,8-tetrahydrobiopterin + L-tyrosine + O2 = (4aS,6R)-4a-hydroxy-L-erythro-5,6,7,8-tetrahydrobiopterin + L-dopa. It participates in catecholamine biosynthesis; dopamine biosynthesis; dopamine from L-tyrosine: step 1/2. With respect to regulation, inhibited in feedback fashion by the catecholamine neurotransmitters, especially by dopamine in competition with tetrahydrobiopterin. Phosphorylation of several Ser/Thr residues in the N-terminus regulates the catalytic activity. Ser-31 and Ser-40 are readily phosphorylated to activate the catalytic activity. A Cysteine modification induced by N-ethylmaleimide (NEM), inhibits tyrosine 3-monooxygenase activity through the modification of the Cys-170. In terms of biological role, catalyzes the conversion of L-tyrosine to L-dihydroxyphenylalanine (L-Dopa), the rate-limiting step in the biosynthesis of catecholamines, dopamine, noradrenaline, and adrenaline. Uses tetrahydrobiopterin and molecular oxygen to convert tyrosine to L-Dopa. In addition to tyrosine, is able to catalyze the hydroxylation of phenylalanine and tryptophan with lower specificity. Positively regulates the regression of retinal hyaloid vessels during postnatal development. The sequence is that of Tyrosine 3-monooxygenase (TH) from Bos taurus (Bovine).